Reading from the N-terminus, the 284-residue chain is Bifunctional protein FolD (284 aa).

166–168 (GAS) lines the NADP(+) pocket.

The protein belongs to the tetrahydrofolate dehydrogenase/cyclohydrolase family. In terms of assembly, homodimer.

The catalysed reaction is (6R)-5,10-methylene-5,6,7,8-tetrahydrofolate + NADP(+) = (6R)-5,10-methenyltetrahydrofolate + NADPH. The enzyme catalyses (6R)-5,10-methenyltetrahydrofolate + H2O = (6R)-10-formyltetrahydrofolate + H(+). It participates in one-carbon metabolism; tetrahydrofolate interconversion. Its function is as follows. Catalyzes the oxidation of 5,10-methylenetetrahydrofolate to 5,10-methenyltetrahydrofolate and then the hydrolysis of 5,10-methenyltetrahydrofolate to 10-formyltetrahydrofolate. The sequence is that of Bifunctional protein FolD from Legionella pneumophila subsp. pneumophila (strain Philadelphia 1 / ATCC 33152 / DSM 7513).